We begin with the raw amino-acid sequence, 290 residues long: ATP synthase gamma chain (290 aa).

Belongs to the ATPase gamma chain family. F-type ATPases have 2 components, CF(1) - the catalytic core - and CF(0) - the membrane proton channel. CF(1) has five subunits: alpha(3), beta(3), gamma(1), delta(1), epsilon(1). CF(0) has three main subunits: a, b and c.

It is found in the cell inner membrane. In terms of biological role, produces ATP from ADP in the presence of a proton gradient across the membrane. The gamma chain is believed to be important in regulating ATPase activity and the flow of protons through the CF(0) complex. The sequence is that of ATP synthase gamma chain from Dictyoglomus turgidum (strain DSM 6724 / Z-1310).